The following is a 272-amino-acid chain: Probable protein VP2 (272 aa).

2 disordered regions span residues 50-116 (GGSR…DFAD) and 195-272 (YSPA…SSSS). Over residues 78–90 (APDPPAGNQPPAL) the composition is skewed to pro residues. The span at 94–108 (GDGGNESGAGGGESG) shows a compositional bias: gly residues. The segment covering 218-230 (SKRDNKENRDRGR) has biased composition (basic and acidic residues). Residues 231 to 246 (AKARAKQKPKKRRRRA) are compositionally biased toward basic residues. A compositionally biased stretch (low complexity) spans 249–272 (ESSSSSSSKSSFNSEEGSSASSSS).

In terms of processing, phosphorylated at C-terminal serines.

This Homo sapiens (Human) protein is Probable protein VP2.